The chain runs to 528 residues: MSQTSLKKERDPSILILDFGSQYSELIARRIRETNVFSLVVSNFISIEDINRINPKGIILSGGPNSVYEQNAPRCDEKIFNLGIPILGICYGMQLMVKELGGTVISATKKAEYGRAPLNIDQESDLLFDVEDKSIMWMSHGDSINCLPDGFNKIAHTENTLHAAISNDVKKLFGVQFHPEVVHSEFGMRVIKNFVYKISCCTADWTTETYIEETIPRIREQVGNKKVLLALSGGVDSSTLAFLLNKAIGNQLTCMFIDQGFMRKGEPEFLMNFFDKKFHIKVEYINARERFIAKLKGITDPEQKRKIIGEEFIRVFEEESNRLGPFQYLAQGTLYPDVIESAGTNIDPKTGERIAVKIKSHHNVGGLPKDLQFKLVEPLRKLFKDEVRKVGAALGLPDEIIKRHPFPGPGLAIRILGEVNNEKLDCLRDADWIVRDEIKKAGLYNDIWQAFAVLLPVKTVGVMGDKRTYSWPIVLRCVSSEDGMTADWSKIPFQILERIANRIVNEVISVNRVVYDITSKPPGTIEWE.

Residues 13–204 (SILILDFGSQ…VYKISCCTAD (192 aa)) form the Glutamine amidotransferase type-1 domain. Cys90 serves as the catalytic Nucleophile. Residues His178 and Glu180 contribute to the active site. The GMPS ATP-PPase domain maps to 205 to 403 (WTTETYIEET…LGLPDEIIKR (199 aa)). Residue 232 to 238 (SGGVDSS) coordinates ATP.

In terms of assembly, homodimer.

It catalyses the reaction XMP + L-glutamine + ATP + H2O = GMP + L-glutamate + AMP + diphosphate + 2 H(+). Its pathway is purine metabolism; GMP biosynthesis; GMP from XMP (L-Gln route): step 1/1. Its function is as follows. Catalyzes the synthesis of GMP from XMP. The protein is GMP synthase [glutamine-hydrolyzing] of Prochlorococcus marinus (strain AS9601).